The chain runs to 207 residues: Ras-related protein Rab-2A (207 aa).

Position 12-20 (12-20 (GDTGVGKSC)) interacts with GTP. An Effector region motif is present at residues 34–42 (HDLTIGVEF). GTP is bound by residues 60–64 (DTAGQ), 118–121 (NKSD), and 148–150 (SAK). Positions 187–207 (GAPTSKQDGTDQKPAGGGCCK) are disordered. 2 S-geranylgeranyl cysteine lipidation sites follow: Cys-205 and Cys-206.

It belongs to the small GTPase superfamily. Rab family.

The protein resides in the cell membrane. The catalysed reaction is GTP + H2O = GDP + phosphate + H(+). Its activity is regulated as follows. Regulated by guanine nucleotide exchange factors (GEFs) which promote the exchange of bound GDP for free GTP, GTPase activating proteins (GAPs) which increase the GTP hydrolysis activity, and GDP dissociation inhibitors which inhibit the dissociation of the nucleotide from the GTPase. Its function is as follows. The small GTPases Rab are key regulators of intracellular membrane trafficking, from the formation of transport vesicles to their fusion with membranes. Rabs cycle between active GTP-bound and inactive GDP-bound states. In their active state, drive transport of vesicular carriers from donor organelles to acceptor organelles to regulate the membrane traffic that maintains organelle identity and morphology. This chain is Ras-related protein Rab-2A (rab2A), found in Dictyostelium discoideum (Social amoeba).